The chain runs to 72 residues: SRY-related protein ADW5 (72 aa).

Residues 1–69 (VKRPMNAFMV…KHMADYPDYK (69 aa)) constitute a DNA-binding region (HMG box).

The protein localises to the nucleus. The sequence is that of SRY-related protein ADW5 from Alligator mississippiensis (American alligator).